The sequence spans 300 residues: Putative hydrolase ML2424 (300 aa).

The active-site Nucleophile is the aspartate 56. 3 residues coordinate Mg(2+): aspartate 56, aspartate 58, and aspartate 231. Aspartate 58 acts as the Proton donor in catalysis.

The protein belongs to the HAD-like hydrolase superfamily. SerB family. Mg(2+) is required as a cofactor.

This chain is Putative hydrolase ML2424, found in Mycobacterium leprae (strain TN).